A 30-amino-acid chain; its full sequence is Photosystem I reaction center subunit XII (30 aa).

The chain crosses the membrane as a helical span at residues 7-26; the sequence is IMVALFAALFTGILALRLGT.

The protein belongs to the PsaM family.

Its subcellular location is the plastid. It localises to the chloroplast thylakoid membrane. The chain is Photosystem I reaction center subunit XII from Mesostigma viride (Green alga).